The sequence spans 415 residues: Putative F-box/FBD/LRR-repeat protein At3g49040 (415 aa).

The region spanning 10 to 58 (EDRISELHEALLVHIMSSLPTKTVVATSVLSKRWRHVWKTVQNLKFVSK) is the F-box domain. 5 LRR repeats span residues 60 to 86 (HQTFSEDVYRFFMLHKAPFLESLDLEF), 87 to 114 (SNQLDASDLGILVGIAFARHVRNLVLDL), 143 to 170 (TLTLKHSILLYFPYRVCLKSLRKLHLYK), 171 to 196 (VHFYGKDSVYNLLCGCPSLRDLIVHR), and 213 to 241 (RLTIEDSGFGYGCCYVINAPSLKYLNIRR). The region spanning 272–377 (ILESLTSAKR…TSLKKATFST (106 aa)) is the FBD domain.

This Arabidopsis thaliana (Mouse-ear cress) protein is Putative F-box/FBD/LRR-repeat protein At3g49040.